Consider the following 406-residue polypeptide: Phosphopentomutase (406 aa).

Mn(2+) contacts are provided by Asp-10, Asp-305, His-310, Asp-346, His-347, and His-358.

Belongs to the phosphopentomutase family. Mn(2+) is required as a cofactor.

It localises to the cytoplasm. The catalysed reaction is 2-deoxy-alpha-D-ribose 1-phosphate = 2-deoxy-D-ribose 5-phosphate. The enzyme catalyses alpha-D-ribose 1-phosphate = D-ribose 5-phosphate. The protein operates within carbohydrate degradation; 2-deoxy-D-ribose 1-phosphate degradation; D-glyceraldehyde 3-phosphate and acetaldehyde from 2-deoxy-alpha-D-ribose 1-phosphate: step 1/2. In terms of biological role, isomerase that catalyzes the conversion of deoxy-ribose 1-phosphate (dRib-1-P) and ribose 1-phosphate (Rib-1-P) to deoxy-ribose 5-phosphate (dRib-5-P) and ribose 5-phosphate (Rib-5-P), respectively. The protein is Phosphopentomutase of Rhizobium johnstonii (strain DSM 114642 / LMG 32736 / 3841) (Rhizobium leguminosarum bv. viciae).